The primary structure comprises 482 residues: O-methyltransferase tpcA (482 aa).

S-adenosyl-L-methionine contacts are provided by residues 293 to 294 (GG), Asp-316, 348 to 349 (SF), and Arg-364. His-368 functions as the Proton acceptor in the catalytic mechanism.

The protein belongs to the class I-like SAM-binding methyltransferase superfamily. Cation-independent O-methyltransferase family. As to expression, specifically expressed in conidia.

It functions in the pathway secondary metabolite biosynthesis. Its function is as follows. O-methyltransferase; part of the gene cluster that mediates the biosynthesis of trypacidin, a mycotoxin with antiprotozoal activity and that plays a role in the infection process. The pathway begins with the synthesis of atrochrysone thioester by the polyketide synthase (PKS) tpcC. The atrochrysone carboxyl ACP thioesterase tpcB then breaks the thioester bond and releases the atrochrysone carboxylic acid from tpcC. The decarboxylase tpcK converts atrochrysone carboxylic acid to atrochrysone which is further reduced into emodin anthrone. The next step is performed by the emodin anthrone oxygenase tpcL that catalyzes the oxidation of emodinanthrone to emodin. Emodin O-methyltransferase encoded by tpcA catalyzes methylation of the 8-hydroxy group of emodin to form questin. Ring cleavage of questin by questin oxidase tpcI leads to desmethylsulochrin via several intermediates including questin epoxide. Another methylation step catalyzed by tpcM leads to the formation of sulochrin which is further converted to monomethylsulfochrin by tpcH. Finally, the tpcJ catalyzes the conversion of monomethylsulfochrin to trypacidin. Trypacidin is toxic for human pulmonary and bronchial epithelial cells by initiating the intracellular formation of nitric oxide (NO) and hydrogen peroxide (H(2)O(2)), thus triggering host necrotic cell death. The trypacidin pathway is also able to produce endocrocin via a distinct route from the endocrocin Enc pathway. The sequence is that of O-methyltransferase tpcA from Aspergillus fumigatus (strain ATCC MYA-4609 / CBS 101355 / FGSC A1100 / Af293) (Neosartorya fumigata).